A 327-amino-acid chain; its full sequence is Endochitinase CH5B (327 aa).

The N-terminal stretch at 1–26 is a signal peptide; that stretch reads MKKNRMMIMICSVGVVWMLLVGGSYG. The Chitin-binding type-1 domain maps to 27–67; the sequence is EQCGRQAGGALCPGGNCCSQFGWCGSTTDYCGKDCQSQCGG. 7 disulfide bridges follow: Cys-29/Cys-44, Cys-38/Cys-50, Cys-43/Cys-57, Cys-61/Cys-65, Cys-96/Cys-158, Cys-169/Cys-177, and Cys-276/Cys-308. Residue Glu-140 is the Proton donor of the active site. Residues 317 to 327 constitute a propeptide, removed in mature form; that stretch reads SLFLSDLVTSQ.

The protein belongs to the glycosyl hydrolase 19 family. Chitinase class I subfamily.

It localises to the vacuole. It catalyses the reaction Random endo-hydrolysis of N-acetyl-beta-D-glucosaminide (1-&gt;4)-beta-linkages in chitin and chitodextrins.. Its function is as follows. Defense against chitin-containing fungal pathogens. In Phaseolus vulgaris (Kidney bean), this protein is Endochitinase CH5B.